The primary structure comprises 269 residues: 4-hydroxy-tetrahydrodipicolinate reductase (269 aa).

NAD(+) is bound by residues 10-15 (GANGRM), Glu36, 99-101 (GTT), and 123-126 (AANF). The active-site Proton donor/acceptor is His156. His157 provides a ligand contact to (S)-2,3,4,5-tetrahydrodipicolinate. Residue Lys160 is the Proton donor of the active site. A (S)-2,3,4,5-tetrahydrodipicolinate-binding site is contributed by 166–167 (GT).

Belongs to the DapB family.

The protein resides in the cytoplasm. The enzyme catalyses (S)-2,3,4,5-tetrahydrodipicolinate + NAD(+) + H2O = (2S,4S)-4-hydroxy-2,3,4,5-tetrahydrodipicolinate + NADH + H(+). The catalysed reaction is (S)-2,3,4,5-tetrahydrodipicolinate + NADP(+) + H2O = (2S,4S)-4-hydroxy-2,3,4,5-tetrahydrodipicolinate + NADPH + H(+). The protein operates within amino-acid biosynthesis; L-lysine biosynthesis via DAP pathway; (S)-tetrahydrodipicolinate from L-aspartate: step 4/4. Functionally, catalyzes the conversion of 4-hydroxy-tetrahydrodipicolinate (HTPA) to tetrahydrodipicolinate. This chain is 4-hydroxy-tetrahydrodipicolinate reductase, found in Neisseria meningitidis serogroup C (strain 053442).